Here is a 90-residue protein sequence, read N- to C-terminus: Putative membrane protein insertion efficiency factor (90 aa).

This sequence belongs to the UPF0161 family.

The protein resides in the cell membrane. Could be involved in insertion of integral membrane proteins into the membrane. The protein is Putative membrane protein insertion efficiency factor of Lactococcus lactis subsp. cremoris (strain MG1363).